Here is a 264-residue protein sequence, read N- to C-terminus: Hydroxyethylthiazole kinase (264 aa).

Met-47 lines the substrate pocket. 2 residues coordinate ATP: Arg-123 and Ser-169. Substrate is bound at residue Gly-196.

The protein belongs to the Thz kinase family. Mg(2+) serves as cofactor.

The enzyme catalyses 5-(2-hydroxyethyl)-4-methylthiazole + ATP = 4-methyl-5-(2-phosphooxyethyl)-thiazole + ADP + H(+). It functions in the pathway cofactor biosynthesis; thiamine diphosphate biosynthesis; 4-methyl-5-(2-phosphoethyl)-thiazole from 5-(2-hydroxyethyl)-4-methylthiazole: step 1/1. Catalyzes the phosphorylation of the hydroxyl group of 4-methyl-5-beta-hydroxyethylthiazole (THZ). This is Hydroxyethylthiazole kinase from Brachyspira hyodysenteriae (strain ATCC 49526 / WA1).